The chain runs to 247 residues: MSKEPDRLFAQPLEQVPDFVFNEDVVQVFPDMIKRSVPGYPTIVENLGVLAARFAQPHSALYDLGASLGAVSQSLRRHVRSDGCRVIAVDNSAAMVERCRQYLTAQDSMFQELLPVQVLEADILTLPFEPASVVAMNFTLQFIAPEQRLALLGRIRQALLPGGALILSEKLRFADDQEQQLLNELHLDFKRANGYSELEIAQKRSAIENVMKPDTLETHKERLHAAGFSKVVPWFQCLNFASLIALP.

Residues Tyr40, 65 to 67 (GAS), 90 to 91 (DN), 122 to 123 (DI), Asn137, and Arg204 each bind S-adenosyl-L-methionine.

Belongs to the class I-like SAM-binding methyltransferase superfamily. Cx-SAM synthase family. As to quaternary structure, homodimer.

The enzyme catalyses prephenate + S-adenosyl-L-methionine = carboxy-S-adenosyl-L-methionine + 3-phenylpyruvate + H2O. In terms of biological role, catalyzes the conversion of S-adenosyl-L-methionine (SAM) to carboxy-S-adenosyl-L-methionine (Cx-SAM). The protein is Carboxy-S-adenosyl-L-methionine synthase of Pseudomonas entomophila (strain L48).